A 248-amino-acid chain; its full sequence is 1-(5-phosphoribosyl)-5-[(5-phosphoribosylamino)methylideneamino] imidazole-4-carboxamide isomerase (248 aa).

Aspartate 7 serves as the catalytic Proton acceptor. Aspartate 129 serves as the catalytic Proton donor.

Belongs to the HisA/HisF family.

It is found in the cytoplasm. It catalyses the reaction 1-(5-phospho-beta-D-ribosyl)-5-[(5-phospho-beta-D-ribosylamino)methylideneamino]imidazole-4-carboxamide = 5-[(5-phospho-1-deoxy-D-ribulos-1-ylimino)methylamino]-1-(5-phospho-beta-D-ribosyl)imidazole-4-carboxamide. Its pathway is amino-acid biosynthesis; L-histidine biosynthesis; L-histidine from 5-phospho-alpha-D-ribose 1-diphosphate: step 4/9. In Aeromonas salmonicida (strain A449), this protein is 1-(5-phosphoribosyl)-5-[(5-phosphoribosylamino)methylideneamino] imidazole-4-carboxamide isomerase.